A 187-amino-acid polypeptide reads, in one-letter code: NAC domain-containing protein 104 (187 aa).

Residues 3–155 (LPPGFRFFPT…KWVICRVYEQ (153 aa)) enclose the NAC domain. Residues 94 to 161 (VGIKKYLTFY…VYEQNCSEEE (68 aa)) mediate DNA binding. A disordered region spans residues 118-142 (LPDSSSSSSRSSKRSSRASSSSHKP).

Expressed in root xylem vessels. Expressed in stems, vascular tissue of cauline leaves and tracheary elements of sepals.

It localises to the nucleus. Functionally, probable transcription factor that influences tracheary elements and xylem development by negatively regulating secondary cell wall fiber synthesis and programmed cell death. This chain is NAC domain-containing protein 104, found in Arabidopsis thaliana (Mouse-ear cress).